Reading from the N-terminus, the 219-residue chain is Protoglabretal synthase ISM2 (219 aa).

5 consecutive transmembrane segments (helical) span residues 26–46, 59–79, 112–132, 144–164, and 178–198; these read VHAW…VLAG, LMIW…YWLF, AVVG…LFAV, ILQL…FITA, and YYKY…LIII. In terms of domain architecture, EXPERA spans 55 to 197; it reads TDKWLMIWWA…TWLLFPALII (143 aa).

The protein belongs to the EBP family.

It is found in the membrane. The catalysed reaction is 7,8-epoxymelianol = protoglabretal. It functions in the pathway secondary metabolite biosynthesis; terpenoid biosynthesis. In terms of biological role, isomerase involved in the biosynthesis of glabretanes triterpene natural products such as glabretal, a component with in vitro antiproliferative properties on lymphocytes. Catalyzes the conversion of 7,8-epoxymelianol to protoglabretal via skeletal rearrangements. The chain is Protoglabretal synthase ISM2 from Ailanthus altissima (Tree-of-heaven).